The following is a 446-amino-acid chain: Chromosomal replication initiator protein DnaA (446 aa).

The segment at 1 to 92 (MENISDLWNS…SQAEEEIDLP (92 aa)) is domain I, interacts with DnaA modulators. Residues 93–109 (PSKPNAAQDDSNHLPQS) form a domain II region. The interval 110 to 326 (MLNPKYTFDT…GALIRVVAYS (217 aa)) is domain III, AAA+ region. The ATP site is built by glycine 154, glycine 156, lysine 157, and threonine 158. The domain IV, binds dsDNA stretch occupies residues 327-446 (SLINKDINAD…QVEEINDILK (120 aa)).

Belongs to the DnaA family. As to quaternary structure, oligomerizes as a right-handed, spiral filament on DNA at oriC.

Its subcellular location is the cytoplasm. Its function is as follows. Plays an essential role in the initiation and regulation of chromosomal replication. ATP-DnaA binds to the origin of replication (oriC) to initiate formation of the DNA replication initiation complex once per cell cycle. Binds the DnaA box (a 9 base pair repeat at the origin) and separates the double-stranded (ds)DNA. Forms a right-handed helical filament on oriC DNA; dsDNA binds to the exterior of the filament while single-stranded (ss)DNA is stabiized in the filament's interior. The ATP-DnaA-oriC complex binds and stabilizes one strand of the AT-rich DNA unwinding element (DUE), permitting loading of DNA polymerase. After initiation quickly degrades to an ADP-DnaA complex that is not apt for DNA replication. Binds acidic phospholipids. This is Chromosomal replication initiator protein DnaA from Bacillus cereus (strain 03BB102).